Reading from the N-terminus, the 99-residue chain is Ferredoxin, heterocyst (99 aa).

A 2Fe-2S ferredoxin-type domain is found at 4–96; that stretch reads YQVRLINKKQ…NCTIKTHQEP (93 aa). Cysteine 42, cysteine 47, cysteine 50, and cysteine 80 together coordinate [2Fe-2S] cluster.

The protein belongs to the 2Fe2S plant-type ferredoxin family. The cofactor is [2Fe-2S] cluster.

In terms of biological role, ferredoxins are iron-sulfur proteins that transfer electrons in a wide variety of metabolic reactions. Donates electrons to the nitrogenase. In Nostoc sp. (strain PCC 7120 / SAG 25.82 / UTEX 2576), this protein is Ferredoxin, heterocyst (fdxH).